We begin with the raw amino-acid sequence, 90 residues long: Small ribosomal subunit protein bS20 (90 aa).

Residues 1–11 (MANIKSSEKDI) are compositionally biased toward basic and acidic residues. Disordered regions lie at residues 1–29 (MANIKSSEKDIRRTKRRNAANSQNRSRLR) and 69–90 (SKNADRKKSRMAKRLNAVSAAA).

The protein belongs to the bacterial ribosomal protein bS20 family.

Binds directly to 16S ribosomal RNA. The protein is Small ribosomal subunit protein bS20 of Leptospira borgpetersenii serovar Hardjo-bovis (strain L550).